Here is an 84-residue protein sequence, read N- to C-terminus: Small ribosomal subunit protein uS17 (84 aa).

Belongs to the universal ribosomal protein uS17 family. Part of the 30S ribosomal subunit.

Its function is as follows. One of the primary rRNA binding proteins, it binds specifically to the 5'-end of 16S ribosomal RNA. The sequence is that of Small ribosomal subunit protein uS17 from Clostridium acetobutylicum (strain ATCC 824 / DSM 792 / JCM 1419 / IAM 19013 / LMG 5710 / NBRC 13948 / NRRL B-527 / VKM B-1787 / 2291 / W).